The chain runs to 282 residues: NADPH-dependent 7-cyano-7-deazaguanine reductase (282 aa).

Residue 88–90 (IES) coordinates substrate. Residue 90-91 (SK) coordinates NADPH. Cys190 functions as the Thioimide intermediate in the catalytic mechanism. Residue Asp197 is the Proton donor of the active site. 229–230 (HE) provides a ligand contact to substrate. An NADPH-binding site is contributed by 258 to 259 (RG).

It belongs to the GTP cyclohydrolase I family. QueF type 2 subfamily. As to quaternary structure, homodimer.

Its subcellular location is the cytoplasm. It catalyses the reaction 7-aminomethyl-7-carbaguanine + 2 NADP(+) = 7-cyano-7-deazaguanine + 2 NADPH + 3 H(+). It functions in the pathway tRNA modification; tRNA-queuosine biosynthesis. In terms of biological role, catalyzes the NADPH-dependent reduction of 7-cyano-7-deazaguanine (preQ0) to 7-aminomethyl-7-deazaguanine (preQ1). The protein is NADPH-dependent 7-cyano-7-deazaguanine reductase of Escherichia coli O17:K52:H18 (strain UMN026 / ExPEC).